We begin with the raw amino-acid sequence, 459 residues long: mRNA-capping enzyme subunit alpha (459 aa).

Residue K70 is the N6-GMP-lysine intermediate of the active site. The interval 415–459 is disordered; the sequence is MAGGSGRPLPSQSQNATLSTSKPVHSQPPSNDKEPKYVDEDDWSD. Residues 424–444 show a composition bias toward polar residues; that stretch reads PSQSQNATLSTSKPVHSQPPS.

The protein belongs to the eukaryotic GTase family. In terms of assembly, heterodimer. The mRNA-capping enzyme is composed of two separate chains alpha and beta, respectively a mRNA guanylyltransferase and an mRNA 5'-triphosphate monophosphatase.

Its subcellular location is the nucleus. The catalysed reaction is a 5'-end diphospho-ribonucleoside in mRNA + GTP + H(+) = a 5'-end (5'-triphosphoguanosine)-ribonucleoside in mRNA + diphosphate. Its function is as follows. Second step of mRNA capping. Transfer of the GMP moiety of GTP to the 5'-diphosphate terminus of RNA via a covalent enzyme-GMP reaction intermediate. This chain is mRNA-capping enzyme subunit alpha (CEG1), found in Saccharomyces cerevisiae (strain ATCC 204508 / S288c) (Baker's yeast).